The sequence spans 190 residues: 3-isopropylmalate dehydratase small subunit (190 aa).

This sequence belongs to the LeuD family. LeuD type 1 subfamily. As to quaternary structure, heterodimer of LeuC and LeuD.

The catalysed reaction is (2R,3S)-3-isopropylmalate = (2S)-2-isopropylmalate. Its pathway is amino-acid biosynthesis; L-leucine biosynthesis; L-leucine from 3-methyl-2-oxobutanoate: step 2/4. Catalyzes the isomerization between 2-isopropylmalate and 3-isopropylmalate, via the formation of 2-isopropylmaleate. This chain is 3-isopropylmalate dehydratase small subunit, found in Staphylococcus aureus (strain MSSA476).